The sequence spans 331 residues: Beta-ketoacyl-[acyl-carrier-protein] synthase III (331 aa).

Residues C115 and H255 contribute to the active site. Residues 256-260 (QANFR) are ACP-binding. The active site involves N285.

Belongs to the thiolase-like superfamily. FabH family. Homodimer.

The protein localises to the cytoplasm. The catalysed reaction is malonyl-[ACP] + acetyl-CoA + H(+) = 3-oxobutanoyl-[ACP] + CO2 + CoA. It participates in lipid metabolism; fatty acid biosynthesis. Its function is as follows. Catalyzes the condensation reaction of fatty acid synthesis by the addition to an acyl acceptor of two carbons from malonyl-ACP. Catalyzes the first condensation reaction which initiates fatty acid synthesis and may therefore play a role in governing the total rate of fatty acid production. Possesses both acetoacetyl-ACP synthase and acetyl transacylase activities. Its substrate specificity determines the biosynthesis of branched-chain and/or straight-chain of fatty acids. The protein is Beta-ketoacyl-[acyl-carrier-protein] synthase III of Helicobacter pylori (strain ATCC 700392 / 26695) (Campylobacter pylori).